The following is a 317-amino-acid chain: MAKNPPENCEGCHILNAEALKSKKICKSLKICGLVFGILALTLIVLFWGSKHFWPEVSKKTYDMEHTFYSNGEKKKIYMEIDPITRTEIFRSGNGTDETLEVHDFKNGYTGIYFVGLQKCFIKTQIKVIPEFSEPEEEIDENEEITTTFFEQSVIWVPAEKPIENRDFLKNSKILEICDNVTMYWINPTLIAVSELQDFEEDGEDLHFPTSEKKGIDQNEQWVVPQVKVEKTRHTRQASEEDLPINDYTENGIEFDPMLDERGYCCIYCRRGNRYCRRVCEPLLGYYPYPYCYQGGRVICRVIMPCNWWVARMLGRV.

Residues 1–30 (MAKNPPENCEGCHILNAEALKSKKICKSLK) lie on the Cytoplasmic side of the membrane. A helical; Signal-anchor for type II membrane protein membrane pass occupies residues 31-50 (ICGLVFGILALTLIVLFWGS). The Extracellular segment spans residues 51–317 (KHFWPEVSKK…WWVARMLGRV (267 aa)). In terms of domain architecture, BRICHOS spans 93–186 (GNGTDETLEV…ICDNVTMYWI (94 aa)). Asparagine 94 carries an N-linked (GlcNAc...) asparagine glycan. An intrachain disulfide couples cysteine 120 to cysteine 178. Asparagine 180 is a glycosylation site (N-linked (GlcNAc...) asparagine). At serine 239 the chain carries Phosphoserine.

Belongs to the chondromodulin-1 family. As to expression, widely expressed with highest expression in tendons and ligaments, in the diaphragm, eye and skeletal muscle. Expressed in neuronal cells of all brain regions. Very low expression, if any, in glial cells.

The protein localises to the membrane. Its subcellular location is the nucleus envelope. Functionally, may be an angiogenesis inhibitor. The protein is Tenomodulin (Tnmd) of Mus musculus (Mouse).